The primary structure comprises 761 residues: Subtilisin-like protease SBT3.15 (761 aa).

The N-terminal stretch at 1 to 21 is a signal peptide; sequence MENSFLSSKLVFLLAIALVLF. A propeptide spans 22–120 (activation peptide); the sequence is LNTELSFLTA…VIPNRILKLK (99 aa). The region spanning 41 to 119 is the Inhibitor I9 domain; the sequence is VYIVYLGQRE…HVIPNRILKL (79 aa). Positions 134–613 constitute a Peptidase S8 domain; that stretch reads PTSFSSSSSA…GGLVNPEKAA (480 aa). N-linked (GlcNAc...) asparagine glycosylation is present at Asn-151. Asp-164 functions as the Charge relay system in the catalytic mechanism. Asn-197 carries an N-linked (GlcNAc...) asparagine glycan. His-241 functions as the Charge relay system in the catalytic mechanism. Asn-256 and Asn-384 each carry an N-linked (GlcNAc...) asparagine glycan. Residue Ser-544 is the Charge relay system of the active site. Residue Asn-636 is glycosylated (N-linked (GlcNAc...) asparagine).

Belongs to the peptidase S8 family.

It is found in the secreted. This Arabidopsis thaliana (Mouse-ear cress) protein is Subtilisin-like protease SBT3.15.